The primary structure comprises 412 residues: Serine hydroxymethyltransferase (412 aa).

Residues Leu-117 and 121-123 (GHL) contribute to the (6S)-5,6,7,8-tetrahydrofolate site. Lys-226 bears the N6-(pyridoxal phosphate)lysine mark.

Belongs to the SHMT family. Homodimer. Pyridoxal 5'-phosphate serves as cofactor.

The protein localises to the cytoplasm. It catalyses the reaction (6R)-5,10-methylene-5,6,7,8-tetrahydrofolate + glycine + H2O = (6S)-5,6,7,8-tetrahydrofolate + L-serine. It participates in one-carbon metabolism; tetrahydrofolate interconversion. Its pathway is amino-acid biosynthesis; glycine biosynthesis; glycine from L-serine: step 1/1. Catalyzes the reversible interconversion of serine and glycine with tetrahydrofolate (THF) serving as the one-carbon carrier. This reaction serves as the major source of one-carbon groups required for the biosynthesis of purines, thymidylate, methionine, and other important biomolecules. Also exhibits THF-independent aldolase activity toward beta-hydroxyamino acids, producing glycine and aldehydes, via a retro-aldol mechanism. The chain is Serine hydroxymethyltransferase from Staphylococcus saprophyticus subsp. saprophyticus (strain ATCC 15305 / DSM 20229 / NCIMB 8711 / NCTC 7292 / S-41).